The primary structure comprises 241 residues: Small ribosomal subunit protein uS3 (241 aa).

A KH type-2 domain is found at 39-107 (IREVLMKNLK…EVVINIVEVR (69 aa)). The disordered stretch occupies residues 219-241 (MAELDHAGGGGGGERRRRERDAA). The span at 231–241 (GERRRRERDAA) shows a compositional bias: basic and acidic residues.

This sequence belongs to the universal ribosomal protein uS3 family. Part of the 30S ribosomal subunit. Forms a tight complex with proteins S10 and S14.

Its function is as follows. Binds the lower part of the 30S subunit head. Binds mRNA in the 70S ribosome, positioning it for translation. The chain is Small ribosomal subunit protein uS3 from Beijerinckia indica subsp. indica (strain ATCC 9039 / DSM 1715 / NCIMB 8712).